Here is a 150-residue protein sequence, read N- to C-terminus: UPF0260 protein PP_4587 (150 aa).

Belongs to the UPF0260 family.

The protein is UPF0260 protein PP_4587 of Pseudomonas putida (strain ATCC 47054 / DSM 6125 / CFBP 8728 / NCIMB 11950 / KT2440).